Reading from the N-terminus, the 262-residue chain is Transcription factor Adf-1 (262 aa).

Residues 24 to 104 (NLIEAVKLNP…QMQFLVDSIR (81 aa)) constitute a DNA-binding region (MADF). One can recognise a BESS domain in the interval 217–256 (SAEDQSFGMVVTDMLNTLGVRQKAEAKVHIIKYLTDMQLL).

In terms of processing, O-glycosylated; contains N-acetylglucosamine side chains.

It is found in the nucleus. Its function is as follows. May play an important role not only in the regulation of Adh expression but also in the transcription of other genes. In Drosophila melanogaster (Fruit fly), this protein is Transcription factor Adf-1 (Adf1).